Consider the following 436-residue polypeptide: UDP-N-acetylmuramate--L-alanine ligase (436 aa).

108-114 is an ATP binding site; sequence GAHGKTS.

The protein belongs to the MurCDEF family.

The protein localises to the cytoplasm. It carries out the reaction UDP-N-acetyl-alpha-D-muramate + L-alanine + ATP = UDP-N-acetyl-alpha-D-muramoyl-L-alanine + ADP + phosphate + H(+). It participates in cell wall biogenesis; peptidoglycan biosynthesis. In terms of biological role, cell wall formation. This Bacillus cytotoxicus (strain DSM 22905 / CIP 110041 / 391-98 / NVH 391-98) protein is UDP-N-acetylmuramate--L-alanine ligase.